The primary structure comprises 34 residues: Photosystem II reaction center protein Psb30 (34 aa).

Residues 7-27 (VAQLISLFLILTSGPAIIVLI) form a helical membrane-spanning segment.

It belongs to the Psb30/Ycf12 family. As to quaternary structure, PSII is composed of 1 copy each of membrane proteins PsbA, PsbB, PsbC, PsbD, PsbE, PsbF, PsbH, PsbI, PsbJ, PsbK, PsbL, PsbM, PsbT, PsbX, PsbY, PsbZ, Psb30/Ycf12, peripheral proteins of the oxygen-evolving complex and a large number of cofactors. It forms dimeric complexes.

The protein localises to the plastid. It localises to the chloroplast thylakoid membrane. Its function is as follows. A core subunit of photosystem II (PSII), probably helps stabilize the reaction center. This chain is Photosystem II reaction center protein Psb30, found in Rhodomonas salina (Cryptomonas salina).